The sequence spans 437 residues: Major royal jelly protein 6 (437 aa).

The N-terminal stretch at 1-20 is a signal peptide; that stretch reads MTNWLLLIVCLSIACQDVTS. N-linked (GlcNAc...) asparagine glycosylation is found at Asn-78, Asn-164, Asn-181, Asn-201, and Asn-324.

The protein belongs to the major royal jelly protein family. Found in and secreted from the hypopharyngeal glands of the worker honey bee (at protein level); expression peaks at 20 days post eclosion. Expressed in the spermatheca of adult queen bees (at protein level); Expression levels are higher in mated queens than in virgin queens. Expressed at low level in the brains of adult worker bees. Protein abundance does not seem to correlate with transcript abundance.

It localises to the secreted. Its function is as follows. Component of royal jelly, a substance produced in the hypopharyngeal gland containing proteins, free amino acids, fatty acids, sugars and other nutrients, which is fed to developing larvae by worker nurse bees. All larvae are fed some royal jelly (also known as worker jelly) early in their development but it forms the principal source of nutrition for larvae destined to become queen bees. Produced in the spermatheca of adult queen bees, along with other major royal jelly proteins, where it may act as a nutrient supply for sperm stored by mated queens, or be involved in energy metabolism. This is Major royal jelly protein 6 from Apis mellifera (Honeybee).